The chain runs to 508 residues: Aromatic-L-amino-acid decarboxylase (508 aa).

Thr-82 is a binding site for substrate. The pyridoxal 5'-phosphate site is built by Ala-148 and Ser-149. His-192 is a binding site for substrate. 2 residues coordinate pyridoxal 5'-phosphate: Thr-246 and Asn-300. Lys-303 carries the post-translational modification N6-(pyridoxal phosphate)lysine.

Belongs to the group II decarboxylase family. In terms of assembly, homodimer. It depends on pyridoxal 5'-phosphate as a cofactor.

It carries out the reaction L-dopa + H(+) = dopamine + CO2. The catalysed reaction is 5-hydroxy-L-tryptophan + H(+) = serotonin + CO2. Its function is as follows. Catalyzes the decarboxylation of L-3,4-dihydroxyphenylalanine (DOPA) to dopamine, L-5-hydroxytryptophan to serotonin and L-tryptophan to tryptamine. In Manduca sexta (Tobacco hawkmoth), this protein is Aromatic-L-amino-acid decarboxylase (Ddc).